Here is a 76-residue protein sequence, read N- to C-terminus: Beta-defensin 121 (76 aa).

Positions 1 to 15 (MKLLLLLLTVTLLLA) are cleaved as a signal peptide. Cystine bridges form between C23–C50, C30–C44, and C34–C51.

It belongs to the beta-defensin family. Abundant expression in the male reproductive tract only.

Its subcellular location is the secreted. In terms of biological role, has antibacterial activity. The protein is Beta-defensin 121 (DEFB121) of Macaca mulatta (Rhesus macaque).